We begin with the raw amino-acid sequence, 243 residues long: Zinc import ATP-binding protein ZnuC (243 aa).

Residues Ile4–Gly219 form the ABC transporter domain. An ATP-binding site is contributed by Gly36–Thr43.

Belongs to the ABC transporter superfamily. Zinc importer (TC 3.A.1.15.5) family. As to quaternary structure, the complex is composed of two ATP-binding proteins (ZnuC), two transmembrane proteins (ZnuB) and a solute-binding protein (ZnuA).

The protein localises to the cell inner membrane. The enzyme catalyses Zn(2+)(out) + ATP(in) + H2O(in) = Zn(2+)(in) + ADP(in) + phosphate(in) + H(+)(in). Part of the ABC transporter complex ZnuABC involved in zinc import. Responsible for energy coupling to the transport system. The protein is Zinc import ATP-binding protein ZnuC of Jannaschia sp. (strain CCS1).